Here is a 319-residue protein sequence, read N- to C-terminus: Major intracellular serine protease (319 aa).

The propeptide occupies 1-17 (MNGEIRLIPYVTNEQIM). The Peptidase S8 domain maps to 23-307 (PEGIKVIKAP…FLYLTAPDEL (285 aa)). Active-site charge relay system residues include aspartate 50, histidine 87, and serine 246.

The protein belongs to the peptidase S8 family. As to quaternary structure, homodimer.

It localises to the cytoplasm. In terms of biological role, major intracellular protease produced by Bacillus subtilis. The polypeptide is Major intracellular serine protease (isp) (Bacillus subtilis (strain 168)).